Consider the following 81-residue polypeptide: Putative chemokine-related protein B42 (81 aa).

3 disulfides stabilise this stretch: cysteine 7–cysteine 73, cysteine 8–cysteine 29, and cysteine 11–cysteine 45.

As to expression, expressed in placenta, heart, lung, liver, pancreas, skeletal muscle and brain.

It localises to the cytoplasm. In Homo sapiens (Human), this protein is Putative chemokine-related protein B42.